Consider the following 1093-residue polypeptide: Carbamoyl phosphate synthase large chain (1093 aa).

Residues 1–412 (MPRRNDIRKI…SLMKALRSLE (412 aa)) are carboxyphosphate synthetic domain. Positions 139, 179, 185, 186, 218, 220, 225, 251, 252, 253, 295, and 309 each coordinate ATP. An ATP-grasp 1 domain is found at 143–338 (KDAMTRIGLD…IAKIAAKLAV (196 aa)). Residues Gln295, Glu309, and Asn311 each coordinate Mg(2+). Residues Gln295, Glu309, and Asn311 each coordinate Mn(2+). Residues 413-560 (TGKRVGAEVL…YSSYEEEDEA (148 aa)) are oligomerization domain. A carbamoyl phosphate synthetic domain region spans residues 561–952 (PQTDKRKVII…AFAKAQLSAG (392 aa)). In terms of domain architecture, ATP-grasp 2 spans 689 to 880 (GKLLEQLQIP…LAKIASRLMT (192 aa)). The ATP site is built by Arg725, His764, Leu766, Glu771, Gly796, Ile797, His798, Ser799, Gln839, and Glu851. Mg(2+) is bound by residues Gln839, Glu851, and Asn853. Mn(2+) contacts are provided by Gln839, Glu851, and Asn853. The MGS-like domain occupies 953–1093 (LILPSSGTVF…QLLHAGHAVK (141 aa)). The segment at 953–1093 (LILPSSGTVF…QLLHAGHAVK (141 aa)) is allosteric domain.

Belongs to the CarB family. Composed of two chains; the small (or glutamine) chain promotes the hydrolysis of glutamine to ammonia, which is used by the large (or ammonia) chain to synthesize carbamoyl phosphate. Tetramer of heterodimers (alpha,beta)4. Mg(2+) serves as cofactor. The cofactor is Mn(2+).

It carries out the reaction hydrogencarbonate + L-glutamine + 2 ATP + H2O = carbamoyl phosphate + L-glutamate + 2 ADP + phosphate + 2 H(+). It catalyses the reaction hydrogencarbonate + NH4(+) + 2 ATP = carbamoyl phosphate + 2 ADP + phosphate + 2 H(+). Its pathway is amino-acid biosynthesis; L-arginine biosynthesis; carbamoyl phosphate from bicarbonate: step 1/1. The protein operates within pyrimidine metabolism; UMP biosynthesis via de novo pathway; (S)-dihydroorotate from bicarbonate: step 1/3. Large subunit of the glutamine-dependent carbamoyl phosphate synthetase (CPSase). CPSase catalyzes the formation of carbamoyl phosphate from the ammonia moiety of glutamine, carbonate, and phosphate donated by ATP, constituting the first step of 2 biosynthetic pathways, one leading to arginine and/or urea and the other to pyrimidine nucleotides. The large subunit (synthetase) binds the substrates ammonia (free or transferred from glutamine from the small subunit), hydrogencarbonate and ATP and carries out an ATP-coupled ligase reaction, activating hydrogencarbonate by forming carboxy phosphate which reacts with ammonia to form carbamoyl phosphate. In Acidobacterium capsulatum (strain ATCC 51196 / DSM 11244 / BCRC 80197 / JCM 7670 / NBRC 15755 / NCIMB 13165 / 161), this protein is Carbamoyl phosphate synthase large chain.